The following is a 470-amino-acid chain: Cysteine--tRNA ligase (470 aa).

Cys-29 serves as a coordination point for Zn(2+). The 'HIGH' region motif lies at 31–41; it reads PTVYNYAHIGN. 3 residues coordinate Zn(2+): Cys-211, His-236, and Glu-240. The 'KMSKS' region motif lies at 273-277; sequence KMSKS. Lys-276 serves as a coordination point for ATP.

The protein belongs to the class-I aminoacyl-tRNA synthetase family. In terms of assembly, monomer. The cofactor is Zn(2+).

The protein localises to the cytoplasm. The catalysed reaction is tRNA(Cys) + L-cysteine + ATP = L-cysteinyl-tRNA(Cys) + AMP + diphosphate. The protein is Cysteine--tRNA ligase of Phenylobacterium zucineum (strain HLK1).